A 521-amino-acid chain; its full sequence is Bifunctional purine biosynthesis protein PurH (521 aa).

The 145-residue stretch at 1–145 (MIKQALISVS…KNHKDVIVIC (145 aa)) folds into the MGS-like domain.

The protein belongs to the PurH family.

The catalysed reaction is (6R)-10-formyltetrahydrofolate + 5-amino-1-(5-phospho-beta-D-ribosyl)imidazole-4-carboxamide = 5-formamido-1-(5-phospho-D-ribosyl)imidazole-4-carboxamide + (6S)-5,6,7,8-tetrahydrofolate. The enzyme catalyses IMP + H2O = 5-formamido-1-(5-phospho-D-ribosyl)imidazole-4-carboxamide. It participates in purine metabolism; IMP biosynthesis via de novo pathway; 5-formamido-1-(5-phospho-D-ribosyl)imidazole-4-carboxamide from 5-amino-1-(5-phospho-D-ribosyl)imidazole-4-carboxamide (10-formyl THF route): step 1/1. The protein operates within purine metabolism; IMP biosynthesis via de novo pathway; IMP from 5-formamido-1-(5-phospho-D-ribosyl)imidazole-4-carboxamide: step 1/1. The polypeptide is Bifunctional purine biosynthesis protein PurH (Herminiimonas arsenicoxydans).